Here is a 161-residue protein sequence, read N- to C-terminus: Non-specific lipid transfer protein GPI-anchored 24 (161 aa).

Residues 1–23 form the signal peptide; it reads MAQTTTLILLLATLLVAATTVSG. Cystine bridges form between cysteine 42-cysteine 79, cysteine 49-cysteine 63, cysteine 64-cysteine 104, and cysteine 77-cysteine 113. The N-linked (GlcNAc...) asparagine glycan is linked to asparagine 92. The GPI-anchor amidated aspartate moiety is linked to residue aspartate 138. The propeptide at 139–161 is removed in mature form; it reads AASKLAGTGLVGIVVITIAAMFY.

It belongs to the plant LTP family.

The protein resides in the cell membrane. Its function is as follows. Probable lipid transfer protein. This chain is Non-specific lipid transfer protein GPI-anchored 24, found in Arabidopsis thaliana (Mouse-ear cress).